We begin with the raw amino-acid sequence, 741 residues long: 1,4-alpha-glucan branching enzyme GlgB (741 aa).

The Nucleophile role is filled by D420. Catalysis depends on E473, which acts as the Proton donor.

It belongs to the glycosyl hydrolase 13 family. GlgB subfamily. Monomer.

The catalysed reaction is Transfers a segment of a (1-&gt;4)-alpha-D-glucan chain to a primary hydroxy group in a similar glucan chain.. The protein operates within glycan biosynthesis; glycogen biosynthesis. Its function is as follows. Catalyzes the formation of the alpha-1,6-glucosidic linkages in glycogen by scission of a 1,4-alpha-linked oligosaccharide from growing alpha-1,4-glucan chains and the subsequent attachment of the oligosaccharide to the alpha-1,6 position. This chain is 1,4-alpha-glucan branching enzyme GlgB, found in Pseudomonas syringae pv. syringae (strain B728a).